The chain runs to 226 residues: UPF0758 protein SE_1336 (226 aa).

The 123-residue stretch at 102 to 224 (QITHPSDVAS…FTSLVEAGYF (123 aa)) folds into the MPN domain. The Zn(2+) site is built by His-173, His-175, and Asp-186. Residues 173-186 (HNHPSGDVTPSKED) carry the JAMM motif motif.

Belongs to the UPF0758 family.

The chain is UPF0758 protein SE_1336 from Staphylococcus epidermidis (strain ATCC 12228 / FDA PCI 1200).